The chain runs to 388 residues: Cuticle-degrading protease (388 aa).

The first 18 residues, 1-18 (MHLSALLTLLPAVLAAPA), serve as a signal peptide directing secretion. Positions 19–107 (TIGRRAEPAP…IEKDAVMRIS (89 aa)) are excised as a propeptide. Residues 41 to 106 (KYIVKFKDDI…FIEKDAVMRI (66 aa)) enclose the Inhibitor I9 domain. Residues 116 to 388 (PWGLGRISHR…TVNYLAYNGA (273 aa)) enclose the Peptidase S8 domain. Intrachain disulfides connect C143-C233 and C288-C360. Active-site charge relay system residues include D148 and H179. The N-linked (GlcNAc...) asparagine glycan is linked to N296. S334 serves as the catalytic Charge relay system.

The protein belongs to the peptidase S8 family.

The protein localises to the secreted. In terms of biological role, capable of breaching the insect cuticle. This is Cuticle-degrading protease (PR1) from Metarhizium anisopliae (Entomophthora anisopliae).